Reading from the N-terminus, the 255-residue chain is Small ribosomal subunit protein eS1 (255 aa).

The segment covering 1 to 18 (MAVGKNKRLSKGKKGLKK) has biased composition (basic residues). The interval 1–28 (MAVGKNKRLSKGKKGLKKRTQDPFSRKD) is disordered. Alanine 2 is modified (N-acetylalanine; partial). The span at 19–28 (RTQDPFSRKD) shows a compositional bias: basic and acidic residues.

The protein belongs to the eukaryotic ribosomal protein eS1 family. In terms of assembly, component of the small ribosomal subunit. Mature ribosomes consist of a small (40S) and a large (60S) subunit. The 40S subunit contains about 33 different proteins and 1 molecule of RNA (18S). The 60S subunit contains about 49 different proteins and 3 molecules of RNA (25S, 5.8S and 5S).

Its subcellular location is the cytoplasm. The sequence is that of Small ribosomal subunit protein eS1 from Paracoccidioides lutzii (strain ATCC MYA-826 / Pb01) (Paracoccidioides brasiliensis).